A 91-amino-acid polypeptide reads, in one-letter code: Small ribosomal subunit protein uS17 (91 aa).

Belongs to the universal ribosomal protein uS17 family. In terms of assembly, part of the 30S ribosomal subunit.

In terms of biological role, one of the primary rRNA binding proteins, it binds specifically to the 5'-end of 16S ribosomal RNA. The polypeptide is Small ribosomal subunit protein uS17 (Salinispora arenicola (strain CNS-205)).